A 311-amino-acid chain; its full sequence is Serpentine receptor class gamma-6 (311 aa).

A run of 7 helical transmembrane segments spans residues 24–44 (MGQL…IYVI), 58–78 (FWLL…FDIF), 101–121 (PLLI…KMVA), 148–168 (LTAC…NILI), 200–220 (YMQI…AILW), 235–255 (IWFA…YLHM), and 266–286 (IFML…VIMI).

It belongs to the nematode receptor-like protein srg family.

It localises to the membrane. This Caenorhabditis elegans protein is Serpentine receptor class gamma-6 (srg-6).